A 284-amino-acid polypeptide reads, in one-letter code: Bifunctional protein FolD (284 aa).

NADP(+) is bound by residues 166 to 168 (GAS) and I232.

The protein belongs to the tetrahydrofolate dehydrogenase/cyclohydrolase family. Homodimer.

The enzyme catalyses (6R)-5,10-methylene-5,6,7,8-tetrahydrofolate + NADP(+) = (6R)-5,10-methenyltetrahydrofolate + NADPH. It catalyses the reaction (6R)-5,10-methenyltetrahydrofolate + H2O = (6R)-10-formyltetrahydrofolate + H(+). It functions in the pathway one-carbon metabolism; tetrahydrofolate interconversion. Its function is as follows. Catalyzes the oxidation of 5,10-methylenetetrahydrofolate to 5,10-methenyltetrahydrofolate and then the hydrolysis of 5,10-methenyltetrahydrofolate to 10-formyltetrahydrofolate. This chain is Bifunctional protein FolD, found in Pseudoalteromonas translucida (strain TAC 125).